Consider the following 103-residue polypeptide: Somatoliberin (103 aa).

A signal peptide spans 1 to 19 (MLLWVLFVILILTSGSHCS). 2 propeptides span residues 20-30 (LPPSPPFRMQR) and 74-103 (QEDS…SADA).

Belongs to the glucagon family.

It localises to the secreted. Its function is as follows. GRF is released by the hypothalamus and acts on the adenohypophyse to stimulate the secretion of growth hormone. The polypeptide is Somatoliberin (Ghrh) (Mus musculus (Mouse)).